The following is a 660-amino-acid chain: Solute carrier family 5 member 4 (660 aa).

Residues 1–28 (MASTLSPSTVTKTPGPPEISERIQNAAD) lie on the Cytoplasmic side of the membrane. The chain crosses the membrane as a helical span at residues 29 to 47 (ISVIVIYFVVVMAVGLWAM). Residues 48-64 (LRTNRGTVGGFFLAGRD) are Extracellular-facing. Residues 65–85 (VTWWPMGASLFASNIGSGHFV) traverse the membrane as a helical segment. Residues 86–105 (GLAGTGAASGIAIAAFEWNA) lie on the Cytoplasmic side of the membrane. The chain crosses the membrane as a helical span at residues 106–126 (LLLLLVLGWFFVPIYIKAGVM). Over 127-171 (TMPEYLRKRFGGKRLQIYLSILSLFICVALRISSDIFSGAIFIKL) the chain is Extracellular. A helical transmembrane segment spans residues 172–191 (ALGLDLYLAIFSLLAITAIY). Residues 192-208 (TITGGLASVIYTDTLQT) lie on the Cytoplasmic side of the membrane. The chain crosses the membrane as a helical span at residues 209–229 (IIMLIGSFILMGFAFVEVGGY). The Extracellular portion of the chain corresponds to 230–270 (ESFTEKYMNAIPTIVEGDNLTISPKCYTPQGDSFHIFRDAV). A glycan (N-linked (GlcNAc...) asparagine) is linked at N248. A helical membrane pass occupies residues 271–291 (TGDIPWPGMIFGMTVVAAWYW). The Cytoplasmic portion of the chain corresponds to 292–314 (CTDQVIVQRCLSGKDMSHVKAAC). The helical transmembrane segment at 315–334 (IMCGYLKLLPMFLMVMPGMI) threads the bilayer. The Extracellular segment spans residues 335–423 (SRILYTEKVA…RKQASEKELL (89 aa)). Residues 424–443 (IAGRLFIILLIVISIVWVPL) form a helical membrane-spanning segment. Residues 444–455 (VQVAQNGQLFHY) are Cytoplasmic-facing. A helical transmembrane segment spans residues 456–476 (IESISSYLGPPIAAVFLLAIF). Over 477-526 (CKRVNEQGAFWGLIIGFVMGLIRMIAEFVYGTGSCLAASNCPQIICGVHY) the chain is Extracellular. A helical membrane pass occupies residues 527–547 (LYFALILFFVSILVVLAISLL). Topologically, residues 548–638 (TKPIPDVHLY…TDTSEKPLWK (91 aa)) are cytoplasmic. A helical membrane pass occupies residues 639-659 (TIVNINAILLLAVAVFVHGYF).

Belongs to the sodium:solute symporter (SSF) (TC 2.A.21) family. As to expression, kidney, intestine, liver, skeletal muscle and spleen.

It localises to the cell membrane. It catalyses the reaction D-glucose(out) + 2 Na(+)(out) = D-glucose(in) + 2 Na(+)(in). Inhibited by phlorizin. Low-affinity sodium/D-glucose symporter with a great selectivity for sugars (D-glucose &gt;&gt; D-galactose). Na(+) and D-glucose transport are tightly coupled at neutral pH, but at acidic pH, ion transport is uncoupled from sugar transport. This Sus scrofa (Pig) protein is Solute carrier family 5 member 4.